A 106-amino-acid chain; its full sequence is Synaptic plasticity regulator PANTS (106 aa).

Residues 67 to 106 (LQQSEKTRLEGKQNNSPVWTLRKNPPPDWYLPLDPGKPRQ) are disordered.

The protein belongs to the UPF0545 family. In terms of processing, rapidly degraded by proteolysis following neuronal stimulation, resulting in increased AMPA receptor clustering.

Its subcellular location is the synapse. It is found in the synaptic cleft. Its function is as follows. Negatively regulates long-term potentiation and modulates adult synaptic plasticity. This is Synaptic plasticity regulator PANTS from Xenopus laevis (African clawed frog).